The primary structure comprises 434 residues: Methylenetetrahydrofolate--tRNA-(uracil-5-)-methyltransferase TrmFO (434 aa).

10–15 is an FAD binding site; sequence GAGLAG.

The protein belongs to the MnmG family. TrmFO subfamily. The cofactor is FAD.

Its subcellular location is the cytoplasm. It carries out the reaction uridine(54) in tRNA + (6R)-5,10-methylene-5,6,7,8-tetrahydrofolate + NADH + H(+) = 5-methyluridine(54) in tRNA + (6S)-5,6,7,8-tetrahydrofolate + NAD(+). The catalysed reaction is uridine(54) in tRNA + (6R)-5,10-methylene-5,6,7,8-tetrahydrofolate + NADPH + H(+) = 5-methyluridine(54) in tRNA + (6S)-5,6,7,8-tetrahydrofolate + NADP(+). Catalyzes the folate-dependent formation of 5-methyl-uridine at position 54 (M-5-U54) in all tRNAs. The sequence is that of Methylenetetrahydrofolate--tRNA-(uracil-5-)-methyltransferase TrmFO from Bacillus cytotoxicus (strain DSM 22905 / CIP 110041 / 391-98 / NVH 391-98).